The chain runs to 137 residues: Outer membrane protein assembly factor BamE (137 aa).

A signal peptide spans 1–18 (MQVKTLLGATFLALSLAS). A lipid anchor (N-palmitoyl cysteine) is attached at Cys19. The S-diacylglycerol cysteine moiety is linked to residue Cys19.

The protein belongs to the BamE family. As to quaternary structure, part of the Bam complex.

The protein resides in the cell outer membrane. Functionally, part of the outer membrane protein assembly complex, which is involved in assembly and insertion of beta-barrel proteins into the outer membrane. The chain is Outer membrane protein assembly factor BamE from Haemophilus influenzae (strain ATCC 51907 / DSM 11121 / KW20 / Rd).